The chain runs to 518 residues: Vesicular inhibitory amino acid transporter (518 aa).

Over 1 to 125 (MATLIRSKLS…WNVTNAIQGM (125 aa)) the chain is Cytoplasmic. The interval 66-98 (EVPSGDPTAEGDSHYQRDGTGPPSSASKDEGLC) is disordered. The helical transmembrane segment at 126-146 (FVLGLPYAILHGGYLGLFLII) threads the bilayer. At 147–197 (FAAVVCCYTGKILIACLYEENEDGETVRVRDSYVDIANACCAPRFPKLGGR) the chain is on the lumenal, vesicle side. A helical transmembrane segment spans residues 198 to 218 (VVNVAQIIELVMTCILYVVVS). Over 219–258 (GNLMYNSFPSLPISQKSWSIIATAMLLPCAFLKNLKAVSK) the chain is Cytoplasmic. Residues 259 to 279 (FSLLCTLAHFVINVLVIAYCL) traverse the membrane as a helical segment. Residues 280–298 (SRARDWAWDKVKFYIDVKK) lie on the Lumenal, vesicle side of the membrane. The chain crosses the membrane as a helical span at residues 299-319 (FPISIGIIVFSYTSQIFLPSL). Residues 320-334 (EGNMQSPKEFHCMMN) are Cytoplasmic-facing. Residues 335–355 (WTHIAACILKGLFALVAYLTW) traverse the membrane as a helical segment. The Lumenal, vesicle segment spans residues 356-376 (ADETKEVITDNLPSTIRAVVN). A helical membrane pass occupies residues 377 to 397 (LFLVAKALLSYPLPFFAAVEV). The Cytoplasmic portion of the chain corresponds to 398 to 431 (LEKSLFQEGARAFFPNCYGGDGRLKSWGLTLRCA). A helical transmembrane segment spans residues 432-452 (LVVFTLLMAIYVPHFALLMGL). Residues 453 to 454 (TG) are Lumenal, vesicle-facing. The helical transmembrane segment at 455-475 (SLTGAGLCFLLPSLFHLKLLW) threads the bilayer. Residues 476-482 (RKLQWHQ) lie on the Cytoplasmic side of the membrane. The chain crosses the membrane as a helical span at residues 483-503 (VFFDVSIFVIGSICSVSGFVH). Over 504 to 518 (SLEGLIEAFRFNIED) the chain is Lumenal, vesicle.

Belongs to the amino acid/polyamine transporter 2 family.

It is found in the cytoplasmic vesicle membrane. The protein resides in the presynapse. The catalysed reaction is 4-aminobutanoate(out) + n H(+)(in) = 4-aminobutanoate(in) + n H(+)(out). It carries out the reaction glycine(out) + n H(+)(in) = glycine(in) + n H(+)(out). The enzyme catalyses beta-alanine(out) + n H(+)(in) = beta-alanine(in) + n H(+)(out). Antiporter that exchanges vesicular protons for cytosolic 4-aminobutanoate or to a lesser extend glycine, thus allowing their secretion from nerve terminals. The transport is equally dependent on the chemical and electrical components of the proton gradient. May also transport beta-alanine. Acidification of GABAergic synaptic vesicles is a prerequisite for 4-aminobutanoate uptake. This chain is Vesicular inhibitory amino acid transporter, found in Xenopus tropicalis (Western clawed frog).